The following is a 317-amino-acid chain: MAPAMGNELQHRTVLLEEAVQALVTRADGVYVDGTFGRGGHSRLVLEKLAESGRLIAFDKDPLAIATAQQIADPRFGIVHESFASLRTAIAERGVGRVSGVLLDLGISSPQIDDPERGFSFRADGPLDMRMDPTRGESAADWLARATVQELTEVIRDYGEERFAFQIAKALVARRAESDRLGPLVSTGELAQIVANVVKTREKGKDPATRTFQAIRIHINQELAELQVVLEAALSLLEQGGRLVVISFHSLEDRIVKRFMQAHASTPAVDRRLPIRAVDLPSPPLKIIGRVFASDAEVAANPRARSAVMRVAERIAP.

S-adenosyl-L-methionine is bound by residues 39–41, Asp-59, Phe-83, Asp-104, and Gln-111; that span reads GGH.

Belongs to the methyltransferase superfamily. RsmH family.

Its subcellular location is the cytoplasm. The enzyme catalyses cytidine(1402) in 16S rRNA + S-adenosyl-L-methionine = N(4)-methylcytidine(1402) in 16S rRNA + S-adenosyl-L-homocysteine + H(+). Functionally, specifically methylates the N4 position of cytidine in position 1402 (C1402) of 16S rRNA. The chain is Ribosomal RNA small subunit methyltransferase H from Paraburkholderia phytofirmans (strain DSM 17436 / LMG 22146 / PsJN) (Burkholderia phytofirmans).